Consider the following 87-residue polypeptide: Phosphoribosyl-ATP pyrophosphatase (87 aa).

It belongs to the PRA-PH family.

It localises to the cytoplasm. The enzyme catalyses 1-(5-phospho-beta-D-ribosyl)-ATP + H2O = 1-(5-phospho-beta-D-ribosyl)-5'-AMP + diphosphate + H(+). Its pathway is amino-acid biosynthesis; L-histidine biosynthesis; L-histidine from 5-phospho-alpha-D-ribose 1-diphosphate: step 2/9. The polypeptide is Phosphoribosyl-ATP pyrophosphatase (Pseudarthrobacter chlorophenolicus (strain ATCC 700700 / DSM 12829 / CIP 107037 / JCM 12360 / KCTC 9906 / NCIMB 13794 / A6) (Arthrobacter chlorophenolicus)).